The chain runs to 406 residues: Zinc finger protein 793 (406 aa).

The 72-residue stretch at 8 to 79 (VSFKDVVVGF…EAACPGCHCW (72 aa)) folds into the KRAB domain. 6 C2H2-type zinc fingers span residues 227 to 249 (HVCSECGKAFCYKSEFIRHQRSH), 255 to 277 (YGCTDCGKAFSHKSTLIKHQRIH), 283 to 305 (FECFFCGKAFTQKSHRTEHQRTH), 311 to 333 (FVCSECGKSFGEKSYLNVHRKMH), 339 to 361 (YRCRECGKSFSQKSCLNKHWRTH), and 367 to 389 (YGCNECGKAFYQKPNLSRHQKIH).

The protein belongs to the krueppel C2H2-type zinc-finger protein family.

Its subcellular location is the nucleus. Functionally, may be involved in transcriptional regulation. The protein is Zinc finger protein 793 (ZNF793) of Homo sapiens (Human).